Consider the following 128-residue polypeptide: 3-aminoacrylate deaminase RutC (128 aa).

It belongs to the RutC family.

The enzyme catalyses (Z)-3-aminoacrylate + H2O + H(+) = 3-oxopropanoate + NH4(+). Involved in pyrimidine catabolism. Catalyzes the deamination of 3-aminoacrylate to malonic semialdehyde, a reaction that can also occur spontaneously. RutC may facilitate the reaction and modulate the metabolic fitness, rather than catalyzing essential functions. This Serratia proteamaculans (strain 568) protein is 3-aminoacrylate deaminase RutC.